The primary structure comprises 157 residues: Transcription antitermination protein NusB (157 aa).

It belongs to the NusB family.

In terms of biological role, involved in transcription antitermination. Required for transcription of ribosomal RNA (rRNA) genes. Binds specifically to the boxA antiterminator sequence of the ribosomal RNA (rrn) operons. This chain is Transcription antitermination protein NusB, found in Xylella fastidiosa (strain Temecula1 / ATCC 700964).